Consider the following 892-residue polypeptide: Translation initiation factor IF-2 (892 aa).

The disordered stretch occupies residues 66–305 (TRSTLNIPGT…SLQQGFQKPA (240 aa)). The segment covering 68 to 82 (STLNIPGTGGKSKSV) has biased composition (polar residues). 2 stretches are compositionally biased toward basic and acidic residues: residues 93–159 (VKRD…KDKV) and 166–216 (DMTK…EENK). Residues 254-269 (GRGRNAKAARPAKKGK) are compositionally biased toward basic residues. Residues 270-282 (HAESKADREEARA) show a composition bias toward basic and acidic residues. One can recognise a tr-type G domain in the interval 391–560 (PRAPVVTIMG…LLQAEVLELK (170 aa)). Positions 400–407 (GHVDHGKT) are G1. Position 400–407 (400–407 (GHVDHGKT)) interacts with GTP. The segment at 425 to 429 (GITQH) is G2. Residues 446-449 (DTPG) are G3. GTP contacts are provided by residues 446-450 (DTPGH) and 500-503 (NKID). The segment at 500 to 503 (NKID) is G4. The G5 stretch occupies residues 536-538 (SAK).

This sequence belongs to the TRAFAC class translation factor GTPase superfamily. Classic translation factor GTPase family. IF-2 subfamily.

Its subcellular location is the cytoplasm. Its function is as follows. One of the essential components for the initiation of protein synthesis. Protects formylmethionyl-tRNA from spontaneous hydrolysis and promotes its binding to the 30S ribosomal subunits. Also involved in the hydrolysis of GTP during the formation of the 70S ribosomal complex. The protein is Translation initiation factor IF-2 of Salmonella typhi.